The chain runs to 212 residues: Pyridoxine/pyridoxamine 5'-phosphate oxidase (212 aa).

Substrate contacts are provided by residues 8–11 (RTNY) and K66. FMN-binding positions include 61-66 (RIVLLK), 76-77 (FT), K83, and Q105. Positions 123, 127, and 131 each coordinate substrate. FMN is bound by residues 140–141 (QS) and W185. 191-193 (RLH) serves as a coordination point for substrate. R195 provides a ligand contact to FMN.

It belongs to the pyridoxamine 5'-phosphate oxidase family. In terms of assembly, homodimer. It depends on FMN as a cofactor.

It catalyses the reaction pyridoxamine 5'-phosphate + O2 + H2O = pyridoxal 5'-phosphate + H2O2 + NH4(+). The catalysed reaction is pyridoxine 5'-phosphate + O2 = pyridoxal 5'-phosphate + H2O2. The protein operates within cofactor metabolism; pyridoxal 5'-phosphate salvage; pyridoxal 5'-phosphate from pyridoxamine 5'-phosphate: step 1/1. It participates in cofactor metabolism; pyridoxal 5'-phosphate salvage; pyridoxal 5'-phosphate from pyridoxine 5'-phosphate: step 1/1. Catalyzes the oxidation of either pyridoxine 5'-phosphate (PNP) or pyridoxamine 5'-phosphate (PMP) into pyridoxal 5'-phosphate (PLP). The polypeptide is Pyridoxine/pyridoxamine 5'-phosphate oxidase (Leptospira biflexa serovar Patoc (strain Patoc 1 / Ames)).